The primary structure comprises 387 residues: Mannitol-1-phosphate 5-dehydrogenase (387 aa).

3–14 (ALHFGAGNIGRG) contributes to the NAD(+) binding site.

This sequence belongs to the mannitol dehydrogenase family.

It catalyses the reaction D-mannitol 1-phosphate + NAD(+) = beta-D-fructose 6-phosphate + NADH + H(+). The sequence is that of Mannitol-1-phosphate 5-dehydrogenase from Yersinia pseudotuberculosis serotype IB (strain PB1/+).